Here is a 131-residue protein sequence, read N- to C-terminus: Small ribosomal subunit protein uS12c (131 aa).

Belongs to the universal ribosomal protein uS12 family. Part of the 30S ribosomal subunit.

It localises to the plastid. It is found in the chloroplast. With S4 and S5 plays an important role in translational accuracy. Located at the interface of the 30S and 50S subunits. The protein is Small ribosomal subunit protein uS12c (rps12) of Stigeoclonium helveticum (Green alga).